A 134-amino-acid polypeptide reads, in one-letter code: Protein Turandot E (134 aa).

The first 38 residues, 1 to 38 (MSNTRTVHSSTSISKMNSALQISCLLVVLGCLLGSGHC), serve as a signal peptide directing secretion.

Belongs to the Turandot family.

It localises to the secreted. Its function is as follows. A humoral factor that may play a role in stress tolerance. The protein is Protein Turandot E of Drosophila melanogaster (Fruit fly).